Reading from the N-terminus, the 232-residue chain is Phosphatidylserine decarboxylase proenzyme (232 aa).

Catalysis depends on Ser190, which acts as the Schiff-base intermediate with substrate; via pyruvic acid. Ser190 bears the Pyruvic acid (Ser); by autocatalysis mark.

Belongs to the phosphatidylserine decarboxylase family. PSD-A subfamily. Heterodimer of a large membrane-associated beta subunit and a small pyruvoyl-containing alpha subunit. Requires pyruvate as cofactor. Post-translationally, is synthesized initially as an inactive proenzyme. Formation of the active enzyme involves a self-maturation process in which the active site pyruvoyl group is generated from an internal serine residue via an autocatalytic post-translational modification. Two non-identical subunits are generated from the proenzyme in this reaction, and the pyruvate is formed at the N-terminus of the alpha chain, which is derived from the carboxyl end of the proenzyme. The post-translation cleavage follows an unusual pathway, termed non-hydrolytic serinolysis, in which the side chain hydroxyl group of the serine supplies its oxygen atom to form the C-terminus of the beta chain, while the remainder of the serine residue undergoes an oxidative deamination to produce ammonia and the pyruvoyl prosthetic group on the alpha chain.

It localises to the cell membrane. The catalysed reaction is a 1,2-diacyl-sn-glycero-3-phospho-L-serine + H(+) = a 1,2-diacyl-sn-glycero-3-phosphoethanolamine + CO2. It participates in phospholipid metabolism; phosphatidylethanolamine biosynthesis; phosphatidylethanolamine from CDP-diacylglycerol: step 2/2. In terms of biological role, catalyzes the formation of phosphatidylethanolamine (PtdEtn) from phosphatidylserine (PtdSer). This chain is Phosphatidylserine decarboxylase proenzyme, found in Bradyrhizobium diazoefficiens (strain JCM 10833 / BCRC 13528 / IAM 13628 / NBRC 14792 / USDA 110).